The chain runs to 265 residues: uncharacterized protein (265 aa).

A disordered region spans residues 233-265 (STACGSDQRPTRLPRASCSSRSISGSAARPWKR). Over residues 247–265 (RASCSSRSISGSAARPWKR) the composition is skewed to low complexity.

This is an uncharacterized protein from Escherichia coli.